A 268-amino-acid polypeptide reads, in one-letter code: UPF0354 protein OB2234 (268 aa).

It belongs to the UPF0354 family.

In Oceanobacillus iheyensis (strain DSM 14371 / CIP 107618 / JCM 11309 / KCTC 3954 / HTE831), this protein is UPF0354 protein OB2234.